Here is a 54-residue protein sequence, read N- to C-terminus: Hydrophobic protein RCI2B (54 aa).

2 consecutive transmembrane segments (helical) span residues 2–22 (STATFVEIILAIILPPLGVFL) and 32–52 (ICLILTLFGYLPGILYALYII).

This sequence belongs to the UPF0057 (PMP3) family.

Its subcellular location is the membrane. The protein is Hydrophobic protein RCI2B (RCI2B) of Arabidopsis thaliana (Mouse-ear cress).